The sequence spans 251 residues: Probable phosphatase Sputcn32_1369 (251 aa).

Zn(2+) contacts are provided by histidine 8, histidine 10, histidine 16, histidine 41, glutamate 74, histidine 102, histidine 132, aspartate 193, and histidine 195.

Belongs to the PHP family. Requires Zn(2+) as cofactor.

This chain is Probable phosphatase Sputcn32_1369, found in Shewanella putrefaciens (strain CN-32 / ATCC BAA-453).